Consider the following 226-residue polypeptide: ATP synthase F(0) complex subunit a (226 aa).

The next 5 helical transmembrane spans lie at 5 to 25, 68 to 88, 97 to 117, 136 to 156, and 189 to 209; these read LFAPFMIPVMLGIPITTLIII, WSLMLISLFLFIASTNLLGML, QLSMNVGMAIPLWAGTVTTGF, FLIPMLVIIETISLFIQPVAW, and AFITFTILALLTILEFAVALI.

The protein belongs to the ATPase A chain family. Component of the ATP synthase complex composed at least of ATP5F1A/subunit alpha, ATP5F1B/subunit beta, ATP5MC1/subunit c (homooctomer), MT-ATP6/subunit a, MT-ATP8/subunit 8, ATP5ME/subunit e, ATP5MF/subunit f, ATP5MG/subunit g, ATP5MK/subunit k, ATP5MJ/subunit j, ATP5F1C/subunit gamma, ATP5F1D/subunit delta, ATP5F1E/subunit epsilon, ATP5PF/subunit F6, ATP5PB/subunit b, ATP5PD/subunit d, ATP5PO/subunit OSCP. ATP synthase complex consists of a soluble F(1) head domain (subunits alpha(3) and beta(3)) - the catalytic core - and a membrane F(0) domain - the membrane proton channel (subunits c, a, 8, e, f, g, k and j). These two domains are linked by a central stalk (subunits gamma, delta, and epsilon) rotating inside the F1 region and a stationary peripheral stalk (subunits F6, b, d, and OSCP). Interacts with DNAJC30; interaction is direct.

It is found in the mitochondrion inner membrane. It catalyses the reaction H(+)(in) = H(+)(out). Its function is as follows. Subunit a, of the mitochondrial membrane ATP synthase complex (F(1)F(0) ATP synthase or Complex V) that produces ATP from ADP in the presence of a proton gradient across the membrane which is generated by electron transport complexes of the respiratory chain. ATP synthase complex consist of a soluble F(1) head domain - the catalytic core - and a membrane F(1) domain - the membrane proton channel. These two domains are linked by a central stalk rotating inside the F(1) region and a stationary peripheral stalk. During catalysis, ATP synthesis in the catalytic domain of F(1) is coupled via a rotary mechanism of the central stalk subunits to proton translocation. With the subunit c (ATP5MC1), forms the proton-conducting channel in the F(0) domain, that contains two crucial half-channels (inlet and outlet) that facilitate proton movement from the mitochondrial intermembrane space (IMS) into the matrix. Protons are taken up via the inlet half-channel and released through the outlet half-channel, following a Grotthuss mechanism. The sequence is that of ATP synthase F(0) complex subunit a from Balaenoptera physalus (Fin whale).